Reading from the N-terminus, the 484-residue chain is UDP-N-acetylmuramoyl-L-alanyl-D-glutamate--2,6-diaminopimelate ligase (484 aa).

A UDP-N-acetyl-alpha-D-muramoyl-L-alanyl-D-glutamate-binding site is contributed by Ser30. 111–117 lines the ATP pocket; it reads GTNGKTT. Residues 153–154, Ser180, Gln186, and Arg188 each bind UDP-N-acetyl-alpha-D-muramoyl-L-alanyl-D-glutamate; that span reads TT. N6-carboxylysine is present on Lys220. Meso-2,6-diaminopimelate-binding positions include Arg378, 402–405, Gly455, and Glu459; that span reads DNPR. Positions 402–405 match the Meso-diaminopimelate recognition motif motif; it reads DNPR.

This sequence belongs to the MurCDEF family. MurE subfamily. Requires Mg(2+) as cofactor. Post-translationally, carboxylation is probably crucial for Mg(2+) binding and, consequently, for the gamma-phosphate positioning of ATP.

It localises to the cytoplasm. It catalyses the reaction UDP-N-acetyl-alpha-D-muramoyl-L-alanyl-D-glutamate + meso-2,6-diaminopimelate + ATP = UDP-N-acetyl-alpha-D-muramoyl-L-alanyl-gamma-D-glutamyl-meso-2,6-diaminopimelate + ADP + phosphate + H(+). The protein operates within cell wall biogenesis; peptidoglycan biosynthesis. In terms of biological role, catalyzes the addition of meso-diaminopimelic acid to the nucleotide precursor UDP-N-acetylmuramoyl-L-alanyl-D-glutamate (UMAG) in the biosynthesis of bacterial cell-wall peptidoglycan. In Phocaeicola vulgatus (strain ATCC 8482 / DSM 1447 / JCM 5826 / CCUG 4940 / NBRC 14291 / NCTC 11154) (Bacteroides vulgatus), this protein is UDP-N-acetylmuramoyl-L-alanyl-D-glutamate--2,6-diaminopimelate ligase.